Here is a 272-residue protein sequence, read N- to C-terminus: ATP synthase subunit a (272 aa).

5 helical membrane-spanning segments follow: residues 41-61 (VLNI…LLIF), 101-121 (LIAP…LMDL), 143-165 (VPSA…ILYY), 221-241 (LIFI…LNVP), and 243-263 (AIFH…LTIV).

It belongs to the ATPase A chain family. In terms of assembly, F-type ATPases have 2 components, CF(1) - the catalytic core - and CF(0) - the membrane proton channel. CF(1) has five subunits: alpha(3), beta(3), gamma(1), delta(1), epsilon(1). CF(0) has three main subunits: a(1), b(2) and c(9-12). The alpha and beta chains form an alternating ring which encloses part of the gamma chain. CF(1) is attached to CF(0) by a central stalk formed by the gamma and epsilon chains, while a peripheral stalk is formed by the delta and b chains.

Its subcellular location is the cell inner membrane. In terms of biological role, key component of the proton channel; it plays a direct role in the translocation of protons across the membrane. This chain is ATP synthase subunit a, found in Sodalis glossinidius (strain morsitans).